We begin with the raw amino-acid sequence, 405 residues long: Secreted aspartic protease 8 (405 aa).

The signal sequence occupies residues 1 to 25; that stretch reads MVSIITFTKNVLVTLAFALLAQGLA. The N-linked (GlcNAc...) asparagine glycan is linked to N50. The segment at 52 to 78 is disordered; that stretch reads TAHGQHHQSQQQQQQQQQQPAQKRGTV. Residues 58 to 70 are compositionally biased toward low complexity; the sequence is HQSQQQQQQQQQQ. A Peptidase A1 domain is found at 89–392; sequence YAATITVGSN…DLDGNTISLA (304 aa). The active site involves D107. A pepstatin A-binding site is contributed by 107-109; the sequence is DTG. A disulfide bond links C122 and C134. D292 is a catalytic residue. 292–296 is a pepstatin A binding site; the sequence is DSGTT. A disulfide bridge connects residues C327 and C358.

It belongs to the peptidase A1 family. As to quaternary structure, monomer.

It is found in the secreted. It catalyses the reaction Preferential cleavage at the carboxyl of hydrophobic amino acids, but fails to cleave 15-Leu-|-Tyr-16, 16-Tyr-|-Leu-17 and 24-Phe-|-Phe-25 of insulin B chain. Activates trypsinogen, and degrades keratin.. Functionally, secreted aspartic peptidases (SAPs) are a group of ten acidic hydrolases considered as key virulence factors. These enzymes supply the fungus with nutrient amino acids as well as are able to degrade the selected host's proteins involved in the immune defense. Moreover, acts toward human hemoglobin though limited proteolysis to generate a variety of antimicrobial hemocidins, enabling to compete with the other microorganisms of the same physiological niche using the microbicidal peptides generated from the host protein. Its function is as follows. Plays a key role in defense against host by cleaving histatin-5 (Hst 5), a peptide from human saliva that carries out fungicidal activity. The cleavage rate decreases in an order of SAP2 &gt; SAP9 &gt; SAP3 &gt; SAP7 &gt; SAP4 &gt; SAP1 &gt; SAP8. The hydrolysis of Hst 5 by SAP8 causes production of the DSHAKRHHGY, HHSHRGY and FHEKHHSHRGY peptides. The protein is Secreted aspartic protease 8 of Candida albicans (Yeast).